The chain runs to 405 residues: CMP-sialic acid transporter 4 (405 aa).

Topologically, residues 1 to 43 (MQRNGVMECSVCHSKVVAPSPRSVSRAYDKHRSKISSKYRALN) are cytoplasmic. Residues 44 to 64 (FLLVSGDCILVGLQPILVFMS) traverse the membrane as a helical segment. Topologically, residues 65–74 (KVDGKFQFSP) are lumenal. A helical transmembrane segment spans residues 75–95 (ISVNFLTEVTKVIFAIVMLII). Topologically, residues 96 to 121 (QSRKQKVGEKPLLSLSTFVQAARNNA) are cytoplasmic. The chain crosses the membrane as a helical span at residues 122–142 (LLAVPALLYAINNYLKFIMQL). Residue Tyr143 is a topological domain, lumenal. A helical transmembrane segment spans residues 144 to 164 (FSPATVKMLSNLKVLVIAILL). Over 165-171 (KFIMRRK) the chain is Cytoplasmic. A helical transmembrane segment spans residues 172 to 192 (FSIIQWEALALLLIGISVNQL). Topologically, residues 193–203 (SSIPDGTKSFG) are lumenal. Residues 204 to 224 (LAVTTIAYIYTLIFVTVPSLA) form a helical membrane-spanning segment. At 225–244 (SVYNEYALKSQFDTSIYLQN) the chain is on the cytoplasmic side. Residues 245 to 265 (LFLYGYGAIFNFLGILGTVIF) traverse the membrane as a helical segment. Residues 266-281 (QGPESFDILQGHSRAT) are Lumenal-facing. The helical transmembrane segment at 282–302 (MFLICNNAAQGILSSFFFKYA) threads the bilayer. Over 303 to 322 (DTILKKYSSTVATIFTGLAS) the chain is Cytoplasmic. A helical membrane pass occupies residues 323–343 (AAFLGHTLTVNFLLGISIVFI). Residues 344 to 405 (SMHQFFSPLA…TDERKPLLPI (62 aa)) lie on the Lumenal side of the membrane. Positions 386–405 (AADDASHLTSTDERKPLLPI) are disordered. The span at 389 to 405 (DASHLTSTDERKPLLPI) shows a compositional bias: basic and acidic residues.

It belongs to the nucleotide-sugar transporter family. CMP-Sialate:CMP antiporter (TC 2.A.7.12) subfamily.

It is found in the golgi apparatus membrane. Sugar transporter involved in the transport of CMP-sialic acid from the cytoplasm into the Golgi. May transport important nucleotide sugars such as CMP-Kdo (2-keto-3-deoxy-D-manno-octulosonic acid) in physiological conditions. In Oryza sativa subsp. indica (Rice), this protein is CMP-sialic acid transporter 4.